The primary structure comprises 668 residues: S-adenosyl-L-methionine-dependent tRNA 4-demethylwyosine synthase TYW1B (668 aa).

The 155-residue stretch at 37–191 (CVQIVIEMQG…NFRAWKTKFI (155 aa)) folds into the Flavodoxin-like domain. FMN-binding positions include 43 to 47 (EMQGF) and 130 to 162 (VFGL…HRVM). The segment at 202-269 (RKKSCGGHCK…QSLNSIVDVE (68 aa)) is disordered. 2 stretches are compositionally biased toward basic and acidic residues: residues 213-223 (GKCESHQHGSE) and 233-243 (DELHHRDTKEE). The segment covering 244-255 (EPFESSSEEEFG) has biased composition (acidic residues). Residues 336–580 (LWNESHRCME…VDLIPEYEIA (245 aa)) enclose the Radical SAM core domain. The [4Fe-4S] cluster site is built by cysteine 352, cysteine 356, and cysteine 359.

This sequence belongs to the TYW1 family. It depends on [4Fe-4S] cluster as a cofactor.

The catalysed reaction is N(1)-methylguanosine(37) in tRNA(Phe) + pyruvate + S-adenosyl-L-methionine = 4-demethylwyosine(37) in tRNA(Phe) + 5'-deoxyadenosine + L-methionine + CO2 + H2O. It participates in tRNA modification; wybutosine-tRNA(Phe) biosynthesis. Probable component of the wybutosine biosynthesis pathway. Wybutosine is a hyper modified guanosine with a tricyclic base found at the 3'-position adjacent to the anticodon of eukaryotic phenylalanine tRNA. Catalyzes the condensation of N-methylguanine with 2 carbon atoms from pyruvate to form the tricyclic 4-demethylwyosine, an intermediate in wybutosine biosynthesis. In Homo sapiens (Human), this protein is S-adenosyl-L-methionine-dependent tRNA 4-demethylwyosine synthase TYW1B (TYW1B).